We begin with the raw amino-acid sequence, 494 residues long: uncharacterized protein (494 aa).

2 VOC domains span residues 18 to 174 and 229 to 408; these read FIDC…FINR and SLDH…FGIL. Fe cation is bound by residues His-232, His-349, and Glu-460.

It belongs to the 4HPPD family. Requires Fe cation as cofactor.

Functionally, may have dioxygenase activity. This is an uncharacterized protein from Dictyostelium discoideum (Social amoeba).